The primary structure comprises 366 residues: Probable methyltransferase-like protein 24 (366 aa).

The first 29 residues, 1–29 (MARERPPGRGCGVLRRCLLGAVLLFGLRL), serve as a signal peptide directing secretion. Residues 36-110 (AGPGSPTRSA…GRPRRKGPRW (75 aa)) form a disordered region. Pro residues predominate over residues 44-63 (SAPPGPAWRPPGPHLPPAPG). Residues 91–100 (TPEPGCCAPR) show a composition bias toward low complexity.

This sequence belongs to the methyltransferase superfamily.

The protein resides in the secreted. In terms of biological role, probable methyltransferase. This Homo sapiens (Human) protein is Probable methyltransferase-like protein 24 (METTL24).